We begin with the raw amino-acid sequence, 155 residues long: 3-hydroxyacyl-[acyl-carrier-protein] dehydratase FabZ (155 aa).

Histidine 54 is an active-site residue.

The protein belongs to the thioester dehydratase family. FabZ subfamily.

The protein resides in the cytoplasm. It carries out the reaction a (3R)-hydroxyacyl-[ACP] = a (2E)-enoyl-[ACP] + H2O. Functionally, involved in unsaturated fatty acids biosynthesis. Catalyzes the dehydration of short chain beta-hydroxyacyl-ACPs and long chain saturated and unsaturated beta-hydroxyacyl-ACPs. The polypeptide is 3-hydroxyacyl-[acyl-carrier-protein] dehydratase FabZ (Burkholderia lata (strain ATCC 17760 / DSM 23089 / LMG 22485 / NCIMB 9086 / R18194 / 383)).